Here is a 269-residue protein sequence, read N- to C-terminus: GTP cyclohydrolase FolE2 1 (269 aa).

This sequence belongs to the GTP cyclohydrolase IV family.

The catalysed reaction is GTP + H2O = 7,8-dihydroneopterin 3'-triphosphate + formate + H(+). Its pathway is cofactor biosynthesis; 7,8-dihydroneopterin triphosphate biosynthesis; 7,8-dihydroneopterin triphosphate from GTP: step 1/1. Functionally, converts GTP to 7,8-dihydroneopterin triphosphate. The polypeptide is GTP cyclohydrolase FolE2 1 (Burkholderia cenocepacia (strain HI2424)).